A 498-amino-acid chain; its full sequence is NAD(P)H-quinone oxidoreductase chain 4, chloroplastic (498 aa).

14 helical membrane passes run 4 to 24 (LPWL…IPLL), 37 to 57 (LGIC…QFHL), 87 to 107 (MGLI…AWPV), 111 to 131 (VRLF…LFAS), 134 to 154 (ILLF…LLSM), 167 to 187 (FLLY…TMGL), 207 to 227 (IAVE…KLPI), 242 to 262 (HYST…YGLI), 274 to 294 (FLFS…ASLI), 305 to 325 (IAYS…SITD), 331 to 351 (AILQ…LAGI), 386 to 406 (LALP…GIVT), 417 to 437 (IILF…LSML), and 461 to 481 (IFIS…PNLV).

This sequence belongs to the complex I subunit 4 family.

It is found in the plastid. The protein resides in the chloroplast thylakoid membrane. It catalyses the reaction a plastoquinone + NADH + (n+1) H(+)(in) = a plastoquinol + NAD(+) + n H(+)(out). The catalysed reaction is a plastoquinone + NADPH + (n+1) H(+)(in) = a plastoquinol + NADP(+) + n H(+)(out). The chain is NAD(P)H-quinone oxidoreductase chain 4, chloroplastic from Psilotum nudum (Whisk fern).